The following is a 377-amino-acid chain: Cilia- and flagella-associated protein 263 (377 aa).

2 coiled-coil regions span residues 95 to 139 (LTVE…ADIR) and 169 to 355 (QKVM…LKGY).

The protein belongs to the CFAP263 family. As to quaternary structure, forms a complex with CFAP184; the interaction is required for functional activity in cilia. Interacts with HAP1 and PCM1.

It is found in the cytoplasm. The protein localises to the cytoskeleton. The protein resides in the microtubule organizing center. It localises to the centrosome. Its subcellular location is the centriolar satellite. It is found in the cell projection. The protein localises to the cilium. Its function is as follows. Component of centriolar satellites contributing to primary cilium formation. In complex with CFAP263, acts as a regulator of ciliary beating that connects radial spoke 3 (RS3) to the inner dynein arm (IDA) and the nexin-dynein regulatory complex (N-DRC). The complex is positioned parallel to N-DRC and forms a connection between the arch at the base of RS3, the IDA tail and N-DRC. The polypeptide is Cilia- and flagella-associated protein 263 (Cfap263) (Mus musculus (Mouse)).